The chain runs to 172 residues: Small ribosomal subunit protein uS5 (172 aa).

In terms of domain architecture, S5 DRBM spans 17–80 (FTEKLIKLNR…ERAKRSMVLF (64 aa)).

The protein belongs to the universal ribosomal protein uS5 family. Part of the 30S ribosomal subunit. Contacts proteins S4 and S8.

In terms of biological role, with S4 and S12 plays an important role in translational accuracy. Located at the back of the 30S subunit body where it stabilizes the conformation of the head with respect to the body. In Treponema pallidum (strain Nichols), this protein is Small ribosomal subunit protein uS5.